The following is a 237-amino-acid chain: MAGVSACIKYSMFTFNFLFWLCGILILALAIWVRVSNDSQAIFGSEDVGSSSYVAVDILIAVGAIIMILGFLGCCGAIKESRCMLLLFFIGLLLILLLQVATGILGAVFKSKSDRIVNETLYENTKLLSATGESEKQFQEAIIVFQEEFKCCGLVNGAADWGNNFQHYPELCACLDKQRPCQSYNGKQVYKETCISFIKDFLAKNLIIVIGISFGLAVIEILGLVFSMVLYCQIGNK.

Residues 1–9 lie on the Cytoplasmic side of the membrane; it reads MAGVSACIK. Residues 10-33 form a helical membrane-spanning segment; sequence YSMFTFNFLFWLCGILILALAIWV. The Extracellular segment spans residues 34-57; the sequence is RVSNDSQAIFGSEDVGSSSYVAVD. A helical membrane pass occupies residues 58 to 72; the sequence is ILIAVGAIIMILGFL. The Cytoplasmic portion of the chain corresponds to 73–83; the sequence is GCCGAIKESRC. The chain crosses the membrane as a helical span at residues 84–109; the sequence is MLLLFFIGLLLILLLQVATGILGAVF. Residues 110–205 are Extracellular-facing; sequence KSKSDRIVNE…SFIKDFLAKN (96 aa). A glycan (N-linked (GlcNAc...) asparagine) is linked at Asn118. Residues 206 to 230 form a helical membrane-spanning segment; that stretch reads LIIVIGISFGLAVIEILGLVFSMVL. Over 231–237 the chain is Cytoplasmic; sequence YCQIGNK.

This sequence belongs to the tetraspanin (TM4SF) family. In terms of assembly, forms homooligomers. Interacts with MEP1B. Interacts with integrin alpha3/ITGA3. Interacts with RICTOR and MTOR. Interacts with ADAM17. Interacts with ECE1. As to expression, gastric, colon, rectal, and pancreatic carcinomas.

It is found in the cell membrane. Structural component of specialized membrane microdomains known as tetraspanin-enriched microdomains (TERMs), which act as platforms for receptor clustering and signaling. Participates thereby in diverse biological functions such as cell signal transduction, migration and protein trafficking. Promotes ADAM17-mediated TNF-alpha processing through recruitment of ADAM17 to tetraspanin-enriched micro-domains (TEMs). Forms a complex with RICTOR and integrin alpha3/ITGA3 to mediate mTORC2 activation and AKT1 phosphorylation leading to cell migration. Reduces apoptosis and autophagy induced by high glucose levels through forming a complex with mTOR and RICTOR. Contributes to the maintenance of intestinal epithelial barrier and plays a role in the regulation of intestine inflammation by switching interferon gamma receptor 1/IFNGR1 from clathrin-dependent to lipid raft-dependent endocytosis route to limit STAT1 activation magnitude and duration. Acts as a modulator of the endothelin axis by associating with endothelin converting enzyme ECE1 and regulating its activity of conversion of the endothelin-1 precursor to endothelin. The polypeptide is Tetraspanin-8 (TSPAN8) (Homo sapiens (Human)).